A 294-amino-acid chain; its full sequence is MSPRGTGCSAGLLMTVGWLLLAGLQSARGTNVTAAVQDAGLAHEGEGEEETENNDSETAENYAPPETEDVSNRNVVKEVEFGMCTVTCGIGVREVILTNGCPGGESKCVVRVEECRGPTDCGWGKPISESLESVRLACIHTSPLNRFKYMWKLLRQDQQSIILVNDSAILEVRKESHPLAFECDTLDNNEIVATIKFTVYTSSELQMRRSSLPATDAALIFVLTIGVIICVFIIFLLIFIIINWAAVKAFWGAKASTPEVQSEQSSVRYKDSTSLDQLPTEMPGEDDALSEWNE.

The signal sequence occupies residues 1–29 (MSPRGTGCSAGLLMTVGWLLLAGLQSARG). Topologically, residues 30–221 (TNVTAAVQDA…LPATDAALIF (192 aa)) are extracellular. A glycan (N-linked (GlcNAc...) asparagine) is linked at asparagine 31. A disordered region spans residues 42–70 (AHEGEGEEETENNDSETAENYAPPETEDV). Residues 46 to 58 (EGEEETENNDSET) show a composition bias toward acidic residues. Residues 222–242 (VLTIGVIICVFIIFLLIFIII) traverse the membrane as a helical segment. The Cytoplasmic segment spans residues 243–294 (NWAAVKAFWGAKASTPEVQSEQSSVRYKDSTSLDQLPTEMPGEDDALSEWNE). At serine 256 the chain carries Phosphoserine. Residues 258-267 (PEVQSEQSSV) show a composition bias toward polar residues. Residues 258-294 (PEVQSEQSSVRYKDSTSLDQLPTEMPGEDDALSEWNE) form a disordered region. A Phosphotyrosine modification is found at tyrosine 269. Residues 283–294 (PGEDDALSEWNE) are compositionally biased toward acidic residues. Phosphoserine is present on serine 290.

Interacts with CYLC1; the interaction may be relevant for proper acrosome attachment to the nuclear envelope. In terms of processing, N-glycosylated. Testis specific.

The protein resides in the cytoplasmic vesicle. Its subcellular location is the secretory vesicle. The protein localises to the acrosome inner membrane. Plays a role in acrosome formation and establishment of normal sperm morphology during spermatogenesis. Important for male fertility. This is Sperm acrosome membrane-associated protein 1 (SPACA1) from Homo sapiens (Human).